The primary structure comprises 339 residues: Tetraacyldisaccharide 4'-kinase (339 aa).

62-69 (VAGGTGKT) lines the ATP pocket.

This sequence belongs to the LpxK family.

The catalysed reaction is a lipid A disaccharide + ATP = a lipid IVA + ADP + H(+). The protein operates within glycolipid biosynthesis; lipid IV(A) biosynthesis; lipid IV(A) from (3R)-3-hydroxytetradecanoyl-[acyl-carrier-protein] and UDP-N-acetyl-alpha-D-glucosamine: step 6/6. In terms of biological role, transfers the gamma-phosphate of ATP to the 4'-position of a tetraacyldisaccharide 1-phosphate intermediate (termed DS-1-P) to form tetraacyldisaccharide 1,4'-bis-phosphate (lipid IVA). This chain is Tetraacyldisaccharide 4'-kinase, found in Xylella fastidiosa (strain M23).